The primary structure comprises 1070 residues: DNA-directed RNA polymerase subunit beta (1070 aa).

The protein belongs to the RNA polymerase beta chain family. As to quaternary structure, in plastids the minimal PEP RNA polymerase catalytic core is composed of four subunits: alpha, beta, beta', and beta''. When a (nuclear-encoded) sigma factor is associated with the core the holoenzyme is formed, which can initiate transcription.

It is found in the plastid. Its subcellular location is the chloroplast. It catalyses the reaction RNA(n) + a ribonucleoside 5'-triphosphate = RNA(n+1) + diphosphate. In terms of biological role, DNA-dependent RNA polymerase catalyzes the transcription of DNA into RNA using the four ribonucleoside triphosphates as substrates. The sequence is that of DNA-directed RNA polymerase subunit beta from Phalaenopsis aphrodite subsp. formosana (Moth orchid).